The primary structure comprises 315 residues: Glycine--tRNA ligase alpha subunit (315 aa).

It belongs to the class-II aminoacyl-tRNA synthetase family. As to quaternary structure, tetramer of two alpha and two beta subunits.

Its subcellular location is the cytoplasm. It catalyses the reaction tRNA(Gly) + glycine + ATP = glycyl-tRNA(Gly) + AMP + diphosphate. The chain is Glycine--tRNA ligase alpha subunit from Pseudomonas paraeruginosa (strain DSM 24068 / PA7) (Pseudomonas aeruginosa (strain PA7)).